The sequence spans 468 residues: Flavin-containing monooxygenase FMO GS-OX-like 1 (468 aa).

16–21 (GLGAAG) is an FAD binding site. Residue 211-216 (GSQASG) participates in NADP(+) binding.

It belongs to the FMO family. FAD serves as cofactor.

Its function is as follows. Catalyzes the conversion of methylthioalkyl glucosinolates of any chain length into methylsulfinylalkyl glucosinolates. This Arabidopsis thaliana (Mouse-ear cress) protein is Flavin-containing monooxygenase FMO GS-OX-like 1.